The following is a 203-amino-acid chain: CASP-like protein 2U5 (203 aa).

Residues 1–31 (MSEHRIPVAADKQISPPISAGEQKGCKGLKR) lie on the Cytoplasmic side of the membrane. The helical transmembrane segment at 32–52 (TDLMLRFAAFVCCAVTMVVLI) threads the bilayer. Residues 53–84 (TDKQTSAIQVPGFNNLTITKTVSFDLAKAFVY) are Extracellular-facing. An N-linked (GlcNAc...) asparagine glycan is attached at Asn-67. The chain crosses the membrane as a helical span at residues 85 to 105 (LVSAAGIGAGYTLLVLVLSII). Residues 106-111 (SAERSK) lie on the Cytoplasmic side of the membrane. A helical transmembrane segment spans residues 112-132 (AIAWFIFVFDQLITYVLLAAA). The Extracellular segment spans residues 133–164 (AASTEVAYMGAHAPPEASWLKVCSLFGRFCHQ). A helical transmembrane segment spans residues 165–185 (LGASLVTSFISTVLFAFSAAI). At 186–203 (SAYYLFSNTNVRPAYSKG) the chain is on the cytoplasmic side.

It belongs to the Casparian strip membrane proteins (CASP) family. Homodimer and heterodimers.

Its subcellular location is the cell membrane. In Selaginella moellendorffii (Spikemoss), this protein is CASP-like protein 2U5.